We begin with the raw amino-acid sequence, 389 residues long: Pyruvate dehydrogenase E1 component subunit alpha, somatic form, mitochondrial (389 aa).

The N-terminal 28 residues, 1 to 28, are a transit peptide targeting the mitochondrion; the sequence is GKMLAAVSRVLSGVAQKPASRVLVASRT. K62 bears the N6-acetyllysine; alternate mark. At K62 the chain carries N6-succinyllysine; alternate. Pyruvate is bound by residues H91, Y117, R118, A156, G164, V166, D195, G196, A197, N224, and Y226. Thiamine diphosphate-binding residues include Y117 and R118. G164, V166, D195, G196, A197, and N224 together coordinate thiamine diphosphate. D195 contacts Mg(2+). N224 and Y226 together coordinate Mg(2+). A Phosphoserine; by PDK1 modification is found at S231. N6-acetyllysine; alternate is present on K243. K243 bears the N6-succinyllysine; alternate mark. An N6-succinyllysine modification is found at K276. Position 291 (H291) interacts with thiamine diphosphate. Phosphoserine; by PDK1, PDK2, PDK3 and PDK4 is present on S292. S294 carries the phosphoserine modification. Phosphoserine; by PDK1, PDK2, PDK3 and PDK4 is present on S299. Y300 is modified (phosphotyrosine). An N6-acetyllysine; alternate modification is found at K312. Residue K312 is modified to N6-succinyllysine; alternate. N6-acetyllysine is present on residues K320 and K335. K384 carries the post-translational modification N6-succinyllysine.

Heterotetramer of two PDHA1 and two PDHB subunits. The heterotetramer interacts with DLAT, and is part of the multimeric pyruvate dehydrogenase complex that contains multiple copies of pyruvate dehydrogenase (E1), dihydrolipoamide acetyltransferase (DLAT, E2) and lipoamide dehydrogenase (DLD, E3). These subunits are bound to an inner core composed of about 48 DLAT and 12 PDHX molecules. Thiamine diphosphate is required as a cofactor. Requires Mg(2+) as cofactor. Phosphorylation at Ser-231, Ser-292 and Ser-299 by PDK family kinases inactivates the enzyme; for this phosphorylation at a single site is sufficient. Phosphorylation at Ser-292 interferes with access to active site, and thereby inactivates the enzyme. Dephosphorylation at all three sites, i.e. at Ser-231, Ser-292 and Ser-299, is required for reactivation. In terms of processing, acetylation alters the phosphorylation pattern. Deacetylated by SIRT3.

Its subcellular location is the mitochondrion matrix. The enzyme catalyses N(6)-[(R)-lipoyl]-L-lysyl-[protein] + pyruvate + H(+) = N(6)-[(R)-S(8)-acetyldihydrolipoyl]-L-lysyl-[protein] + CO2. Pyruvate dehydrogenase activity is inhibited by phosphorylation of PDHA1; it is reactivated by dephosphorylation. The pyruvate dehydrogenase complex catalyzes the overall conversion of pyruvate to acetyl-CoA and CO(2), and thereby links the glycolytic pathway to the tricarboxylic cycle. This chain is Pyruvate dehydrogenase E1 component subunit alpha, somatic form, mitochondrial (PDHA1), found in Sus scrofa (Pig).